The following is a 1690-amino-acid chain: Lysine-specific demethylase 5A (1690 aa).

One can recognise a JmjN domain in the interval 19 to 60 (CPVFEPSWEEFTDPLSFIGRIRPLAEKTGICKIRPPKDWQPP). Positions 84–174 (TRVRLDFLDQ…ILYPYELFQS (91 aa)) constitute an ARID domain. Residue K191 forms a Glycyl lysine isopeptide (Lys-Gly) (interchain with G-Cter in SUMO2) linkage. At S204 the chain carries Phosphoserine. The PHD-type 1 zinc-finger motif lies at 293 to 343 (LYVCMFCGRGNNEDKLLLCDGCDDSYHTFCLIPPLPDVPKGDWRCPKCVAE). Residue Y409 participates in 2-oxoglutarate binding. Residues 419 to 423 (GSGFP) carry the GSGFP motif motif. One can recognise a JmjC domain in the interval 437–603 (EYALSGWNLN…IGRQCVNHYR (167 aa)). Fe cation-binding residues include H483 and E485. Residues S491, N493, and K501 each contribute to the 2-oxoglutarate site. H571 serves as a coordination point for Fe cation. The C5HC2 zinc finger occupies 676 to 728 (CSACRTTCFLSALTCSCNPERLVCLYHPTDLCPCPMQKKCLRYRYPLEDLPSL). A Glycyl lysine isopeptide (Lys-Gly) (interchain with G-Cter in SUMO2) cross-link involves residue K1007. S1111 carries the phosphoserine modification. A PHD-type 2 zinc finger spans residues 1161–1218 (VKFCICRKTASGFMLQCELCKDWFHNSCVPLPKSSSQKKGSSWQAKEVKFLCPLCMRS). Disordered regions lie at residues 1327–1348 (SVSS…SDED) and 1407–1433 (KSCS…LEPP). 2 positions are modified to phosphoserine: S1330 and S1331. Positions 1337–1348 (DYDDEETDSDED) are enriched in acidic residues. The residue at position 1343 (T1343) is a Phosphothreonine. S1345 is subject to Phosphoserine. S1438 and S1488 each carry phosphoserine. Basic and acidic residues-rich tracts occupy residues 1490 to 1503 (EEKP…DSSE) and 1520 to 1530 (GKQKSKELKKM). Disordered regions lie at residues 1490-1509 (EEKP…RKRK) and 1516-1543 (LFGE…LGAD). Y1595 carries the phosphotyrosine modification. S1598 and S1603 each carry phosphoserine. The PHD-type 3 zinc-finger motif lies at 1607–1661 (NAVCAAQNCQRPCKDKVDWVQCDGGCDEWFHQVCVGVSPEMAENEDYICINCAKK). An interaction with LMO2 region spans residues 1623-1690 (VDWVQCDGGC…LPMEDLKETS (68 aa)). Phosphoserine is present on S1666.

The protein belongs to the JARID1 histone demethylase family. In terms of assembly, interacts with SUZ12; the interaction is direct. Interacts with the viral protein-binding domain of RB1. Interacts with ESR1, MYC, MYCN and LMO2. Interacts with HDAC1; this interaction impairs histone deacetylation by HDAC1. Interacts with BMAL1 and CLOCK. Interacts (via PHD-type 1 zinc finger) with histone H3 unmodified at 'Lys-4' and (via PHD-type 3 zinc finger) with histone H3 di- and trimethylated at 'Lys-4'. Fe(2+) serves as cofactor.

The protein localises to the nucleus. The protein resides in the nucleolus. It catalyses the reaction N(6),N(6),N(6)-trimethyl-L-lysyl(4)-[histone H3] + 3 2-oxoglutarate + 3 O2 = L-lysyl(4)-[histone H3] + 3 formaldehyde + 3 succinate + 3 CO2. Its activity is regulated as follows. The inhibitors KDOAM-25, CPI-455 and others inhibits its demethylase activity, resulting to cell growth arrest in cancer cells. Functionally, histone demethylase that specifically demethylates 'Lys-4' of histone H3, thereby playing a central role in histone code. Does not demethylate histone H3 'Lys-9', H3 'Lys-27', H3 'Lys-36', H3 'Lys-79' or H4 'Lys-20'. Demethylates trimethylated and dimethylated but not monomethylated H3 'Lys-4'. Regulates specific gene transcription through DNA-binding on 5'-CCGCCC-3' motif. May stimulate transcription mediated by nuclear receptors. Involved in transcriptional regulation of Hox proteins during cell differentiation. May participate in transcriptional repression of cytokines such as CXCL12. Plays a role in the regulation of the circadian rhythm and in maintaining the normal periodicity of the circadian clock. In a histone demethylase-independent manner, acts as a coactivator of the CLOCK-BMAL1-mediated transcriptional activation of PER1/2 and other clock-controlled genes and increases histone acetylation at PER1/2 promoters by inhibiting the activity of HDAC1. Seems to act as a transcriptional corepressor for some genes such as MT1F and to favor the proliferation of cancer cells. This is Lysine-specific demethylase 5A from Homo sapiens (Human).